We begin with the raw amino-acid sequence, 338 residues long: Pyridoxal 5'-phosphate synthase subunit PdxS (338 aa).

Residue Asp66 coordinates D-ribose 5-phosphate. The active-site Schiff-base intermediate with D-ribose 5-phosphate is the Lys123. Gly195 is a D-ribose 5-phosphate binding site. Lys207 is a binding site for D-glyceraldehyde 3-phosphate. D-ribose 5-phosphate is bound by residues Gly256 and 277–278 (GS).

The protein belongs to the PdxS/SNZ family. As to quaternary structure, in the presence of PdxT, forms a dodecamer of heterodimers.

The enzyme catalyses aldehydo-D-ribose 5-phosphate + D-glyceraldehyde 3-phosphate + L-glutamine = pyridoxal 5'-phosphate + L-glutamate + phosphate + 3 H2O + H(+). It functions in the pathway cofactor biosynthesis; pyridoxal 5'-phosphate biosynthesis. In terms of biological role, catalyzes the formation of pyridoxal 5'-phosphate from ribose 5-phosphate (RBP), glyceraldehyde 3-phosphate (G3P) and ammonia. The ammonia is provided by the PdxT subunit. Can also use ribulose 5-phosphate and dihydroxyacetone phosphate as substrates, resulting from enzyme-catalyzed isomerization of RBP and G3P, respectively. The chain is Pyridoxal 5'-phosphate synthase subunit PdxS from Saccharolobus islandicus (strain Y.N.15.51 / Yellowstone #2) (Sulfolobus islandicus).